We begin with the raw amino-acid sequence, 133 residues long: Profilin (133 aa).

It belongs to the profilin family.

More likely to influence phosphoinositide metabolism than actin assembly. The sequence is that of Profilin from Vaccinia virus (strain Tian Tan) (VACV).